We begin with the raw amino-acid sequence, 491 residues long: Ketol-acid reductoisomerase (NADP(+)) (491 aa).

Residues alanine 15–serine 208 enclose the KARI N-terminal Rossmann domain. Residues cysteine 45 to glutamine 48, arginine 68, arginine 76, serine 78, and aspartate 108 to glutamine 110 contribute to the NADP(+) site. Residue histidine 132 is part of the active site. Glycine 158 contributes to the NADP(+) binding site. KARI C-terminal knotted domains are found at residues serine 209 to glutamine 344 and phenylalanine 345 to methionine 484. Mg(2+)-binding residues include aspartate 217, glutamate 221, glutamate 389, and glutamate 393. Serine 414 lines the substrate pocket.

It belongs to the ketol-acid reductoisomerase family. The cofactor is Mg(2+).

The enzyme catalyses (2R)-2,3-dihydroxy-3-methylbutanoate + NADP(+) = (2S)-2-acetolactate + NADPH + H(+). The catalysed reaction is (2R,3R)-2,3-dihydroxy-3-methylpentanoate + NADP(+) = (S)-2-ethyl-2-hydroxy-3-oxobutanoate + NADPH + H(+). It functions in the pathway amino-acid biosynthesis; L-isoleucine biosynthesis; L-isoleucine from 2-oxobutanoate: step 2/4. It participates in amino-acid biosynthesis; L-valine biosynthesis; L-valine from pyruvate: step 2/4. Involved in the biosynthesis of branched-chain amino acids (BCAA). Catalyzes an alkyl-migration followed by a ketol-acid reduction of (S)-2-acetolactate (S2AL) to yield (R)-2,3-dihydroxy-isovalerate. In the isomerase reaction, S2AL is rearranged via a Mg-dependent methyl migration to produce 3-hydroxy-3-methyl-2-ketobutyrate (HMKB). In the reductase reaction, this 2-ketoacid undergoes a metal-dependent reduction by NADPH to yield (R)-2,3-dihydroxy-isovalerate. This is Ketol-acid reductoisomerase (NADP(+)) from Salmonella choleraesuis (strain SC-B67).